A 341-amino-acid chain; its full sequence is Protein P3 (341 aa).

A disordered region spans residues 46–175; the sequence is RARQAANPVS…QTKNAPDANE (130 aa). A compositionally biased stretch (basic residues) spans 97-116; sequence KSKRAVRREKRRTAAKKATN. Over residues 142–152 the composition is skewed to low complexity; that stretch reads SYLSSLLSSPS.

Belongs to the nepovirus protein P3 family.

This chain is Protein P3, found in Vitis rupestris (Grape).